We begin with the raw amino-acid sequence, 76 residues long: Acyl carrier protein (76 aa).

A Carrier domain is found at 1–76 (MSIEERVKKI…SAIDYVQNNQ (76 aa)). Residue Ser36 is modified to O-(pantetheine 4'-phosphoryl)serine.

This sequence belongs to the acyl carrier protein (ACP) family. Post-translationally, 4'-phosphopantetheine is transferred from CoA to a specific serine of apo-ACP by AcpS. This modification is essential for activity because fatty acids are bound in thioester linkage to the sulfhydryl of the prosthetic group.

Its subcellular location is the cytoplasm. It participates in lipid metabolism; fatty acid biosynthesis. Functionally, carrier of the growing fatty acid chain in fatty acid biosynthesis. The polypeptide is Acyl carrier protein (Pasteurella multocida (strain Pm70)).